A 403-amino-acid chain; its full sequence is Ubiquitin-like modifier-activating enzyme 5 (403 aa).

Gly81, Asp102, Lys125, Asn148, and Asn182 together coordinate ATP. Cys224 and Cys227 together coordinate Zn(2+). The Glycyl thioester intermediate role is filled by Cys248. 2 residues coordinate Zn(2+): Cys301 and Cys306. The UFM1-interacting sequence (UIS) signature appears at 333–345; the sequence is VVHEDNEWGIELV. The interval 346-376 is linker; the sequence is SEVSEEELKNSSGPVPTLPEGITVAYTVPKK. 2 positions are modified to phosphoserine: Ser357 and Ser392. Positions 388–403 match the UFC1-binding sequence (UFC) motif; the sequence is DSGESLEDLMARMKNM.

Belongs to the ubiquitin-activating E1 family. UBA5 subfamily. Homodimer; homodimerization is required for UFM1 activation. Interacts (via UIS motif) with UFM1; binds UFM1 via a trans-binding mechanism in which UFM1 interacts with distinct sites in both subunits of the UBA5 homodimer. Interacts (via C-terminus) with UFC1. Interacts (via UIS motif) with GABARAPL2 and, with lower affinity, with GABARAP and GABARAPL1.

The protein resides in the cytoplasm. The protein localises to the nucleus. Its subcellular location is the endoplasmic reticulum membrane. It is found in the golgi apparatus. E1-like enzyme which specifically catalyzes the first step in ufmylation. Activates UFM1 by first adenylating its C-terminal glycine residue with ATP, and thereafter linking this residue to the side chain of a cysteine residue in E1, yielding a UFM1-E1 thioester and free AMP. Activates UFM1 via a trans-binding mechanism, in which UFM1 interacts with distinct sites in both subunits of the UBA5 homodimer. Trans-binding also promotes stabilization of the UBA5 homodimer, and enhances ATP-binding. Transfer of UFM1 from UBA5 to the E2-like enzyme UFC1 also takes place using a trans mechanism. Ufmylation plays a key role in various processes, such as ribosome recycling, response to DNA damage, interferon response or reticulophagy (also called ER-phagy). Ufmylation is essential for erythroid differentiation of both megakaryocytes and erythrocytes. The polypeptide is Ubiquitin-like modifier-activating enzyme 5 (Mus musculus (Mouse)).